Reading from the N-terminus, the 102-residue chain is uncharacterized protein (102 aa).

The tract at residues 79 to 102 is disordered; that stretch reads AELLHPSPAPMPPATHGRSAAPCS.

This is an uncharacterized protein from Homo sapiens (Human).